The primary structure comprises 326 residues: Transposase for insertion sequence element IS4351 (326 aa).

One can recognise an Integrase catalytic domain in the interval 156–317 (IDERPEIVEL…TPNEKFKQII (162 aa)).

It belongs to the transposase IS30 family.

Required for the transposition of the insertion element. The protein is Transposase for insertion sequence element IS4351 of Bacteroides fragilis.